Here is a 321-residue protein sequence, read N- to C-terminus: PI-PLC X domain-containing protein 3 (321 aa).

The PI-PLC X-box domain maps to 22 to 197; sequence SMHSIPLTNL…DYQVLVFYHS (176 aa). Active-site residues include His37 and His114.

Expressed at highest levels in heart. Also detected in kidney, lung, small intestine and colon. Expressed at very low levels, if any, in leukocytes, thymus and skeletal muscle.

The protein resides in the cytoplasm. The chain is PI-PLC X domain-containing protein 3 (PLCXD3) from Homo sapiens (Human).